A 154-amino-acid polypeptide reads, in one-letter code: Low molecular weight protein-tyrosine-phosphatase PtpA (154 aa).

Cysteine 8 functions as the Nucleophile in the catalytic mechanism. Residue arginine 14 is part of the active site. Aspartate 120 serves as the catalytic Proton donor.

The protein belongs to the low molecular weight phosphotyrosine protein phosphatase family. In terms of assembly, interacts with host CORO1A. In terms of processing, phosphorylations at Tyr-122 and Tyr-123 are essential for phosphatase activity.

Its subcellular location is the secreted. It catalyses the reaction O-phospho-L-tyrosyl-[protein] + H2O = L-tyrosyl-[protein] + phosphate. Functionally, secreted tyrosine phosphatase that plays a critical role during infection as a bacterial effector protein that counteracts host defenses. Required for intramacrophage survival. The protein is Low molecular weight protein-tyrosine-phosphatase PtpA (ptpA) of Staphylococcus aureus (strain bovine RF122 / ET3-1).